The sequence spans 138 residues: Small ribosomal subunit protein uS11c (138 aa).

Positions 1-23 are disordered; it reads MAKPIQRIGSRRNGPIGSRKNGR.

Belongs to the universal ribosomal protein uS11 family. As to quaternary structure, part of the 30S ribosomal subunit.

It is found in the plastid. It localises to the chloroplast. The polypeptide is Small ribosomal subunit protein uS11c (Platanus occidentalis (Sycamore)).